The chain runs to 114 residues: MTDDVALPLQFTDAAASKVKNLISDENNPDLKLRVYITGGGCSGFQYGFTFDDKVNEGDMTIEKSGVALVVDPMSLQYLVGGSVDYTEGLEGSRFIVTNPNAKTTCGCGSSFSI.

Iron-sulfur cluster-binding residues include cysteine 42, cysteine 106, and cysteine 108.

The protein belongs to the HesB/IscA family. Homodimer. Iron-sulfur cluster serves as cofactor.

In terms of biological role, required for insertion of 4Fe-4S clusters for at least IspG. This is Iron-sulfur cluster insertion protein ErpA from Erwinia tasmaniensis (strain DSM 17950 / CFBP 7177 / CIP 109463 / NCPPB 4357 / Et1/99).